The sequence spans 185 residues: Ribosome-recycling factor (185 aa).

Belongs to the RRF family.

The protein localises to the cytoplasm. Its function is as follows. Responsible for the release of ribosomes from messenger RNA at the termination of protein biosynthesis. May increase the efficiency of translation by recycling ribosomes from one round of translation to another. In Mycobacterium bovis (strain BCG / Pasteur 1173P2), this protein is Ribosome-recycling factor.